The sequence spans 615 residues: Medium-chain acyl-CoA ligase ACSF2, mitochondrial (615 aa).

A mitochondrion-targeting transit peptide spans 1–41 (MAVYVGMLRLGRLCAGSSGVLGARVALSRSWQEARLQGVRF). The residue at position 179 (Lys179) is an N6-acetyllysine. Lys182 carries the post-translational modification N6-acetyllysine; alternate. Lys182 carries the N6-succinyllysine; alternate modification. Position 263 to 271 (263 to 271 (TSGTTGSPK)) interacts with ATP. N6-acetyllysine occurs at positions 340 and 398. Lys478 is subject to N6-succinyllysine. Residues Asp493 and Arg508 each contribute to the ATP site. Lys510 is modified (N6-acetyllysine). Residues Lys544 and Lys570 each carry the N6-acetyllysine; alternate modification. N6-succinyllysine; alternate is present on residues Lys544 and Lys570. Lys599 contacts ATP. Lys599 carries the post-translational modification N6-succinyllysine.

It belongs to the ATP-dependent AMP-binding enzyme family.

It is found in the mitochondrion. The catalysed reaction is a medium-chain fatty acid + ATP + CoA = a medium-chain fatty acyl-CoA + AMP + diphosphate. It catalyses the reaction octanoate + ATP + CoA = octanoyl-CoA + AMP + diphosphate. In terms of biological role, acyl-CoA synthases catalyze the initial reaction in fatty acid metabolism, by forming a thioester with CoA. Has some preference toward medium-chain substrates. Plays a role in adipocyte differentiation. The chain is Medium-chain acyl-CoA ligase ACSF2, mitochondrial from Pongo abelii (Sumatran orangutan).